We begin with the raw amino-acid sequence, 390 residues long: MAAGRGERAGQSAEGPKQYRLIGAEAVLARTLRAFTDCPLIGTIAVVIHPDDHALYRRAVPEKHENVILVTGGPTRQESTRLGLLALKDEAPQYVLIHDGVRPFIGQDLLERIIANLTPDNGVLPALAVSDTLKRAAADGMVETTISRTGLFAAQTPQAFPYAPILDAHEKAFAINRTDFTDDAAIAEWQEIAVRIIEGSADNTKLTWAKDIEMADKRLRQDHAVFPDIRTGNGYDVHSFEPGDHVTLCGVKIPHEAKLNGHSDADVALHALTDALLATRGAGDIGTHFPPSDPQWKGAASRIFIEHAAKIVREAGGRIANVDVTLISEAPKIGPHRAAMTQALCDMLGIAADRVSIKATTNEKLGFVGRREGIAAIATATVIYPGEVPE.

The tract at residues 1 to 229 is 2-C-methyl-D-erythritol 4-phosphate cytidylyltransferase; that stretch reads MAAGRGERAG…RQDHAVFPDI (229 aa). The segment at 230–390 is 2-C-methyl-D-erythritol 2,4-cyclodiphosphate synthase; sequence RTGNGYDVHS…TVIYPGEVPE (161 aa). 2 residues coordinate a divalent metal cation: Asp-236 and His-238. 4-CDP-2-C-methyl-D-erythritol 2-phosphate is bound by residues 236 to 238 and 262 to 263; these read DVH and HS. His-270 serves as a coordination point for a divalent metal cation. Residues 284–286, 360–363, Phe-367, and Arg-370 each bind 4-CDP-2-C-methyl-D-erythritol 2-phosphate; these read DIG and TTNE.

It in the N-terminal section; belongs to the IspD/TarI cytidylyltransferase family. IspD subfamily. The protein in the C-terminal section; belongs to the IspF family. It depends on a divalent metal cation as a cofactor.

It catalyses the reaction 2-C-methyl-D-erythritol 4-phosphate + CTP + H(+) = 4-CDP-2-C-methyl-D-erythritol + diphosphate. The enzyme catalyses 4-CDP-2-C-methyl-D-erythritol 2-phosphate = 2-C-methyl-D-erythritol 2,4-cyclic diphosphate + CMP. The protein operates within isoprenoid biosynthesis; isopentenyl diphosphate biosynthesis via DXP pathway; isopentenyl diphosphate from 1-deoxy-D-xylulose 5-phosphate: step 2/6. Its pathway is isoprenoid biosynthesis; isopentenyl diphosphate biosynthesis via DXP pathway; isopentenyl diphosphate from 1-deoxy-D-xylulose 5-phosphate: step 4/6. Its function is as follows. Bifunctional enzyme that catalyzes the formation of 4-diphosphocytidyl-2-C-methyl-D-erythritol from CTP and 2-C-methyl-D-erythritol 4-phosphate (MEP) (IspD), and catalyzes the conversion of 4-diphosphocytidyl-2-C-methyl-D-erythritol 2-phosphate (CDP-ME2P) to 2-C-methyl-D-erythritol 2,4-cyclodiphosphate (ME-CPP) with a corresponding release of cytidine 5-monophosphate (CMP) (IspF). This Brucella abortus biovar 1 (strain 9-941) protein is Bifunctional enzyme IspD/IspF.